Reading from the N-terminus, the 582-residue chain is Actin-histidine N-methyltransferase (582 aa).

Residues arginine 75, 104-106 (EGF), arginine 254, 275-279 (DMCNH), and 325-327 (NGF) contribute to the S-adenosyl-L-methionine site. The region spanning 94 to 314 (DGFELVEFPE…SGEQIYIFYG (221 aa)) is the SET domain. The disordered stretch occupies residues 550–582 (DKDLLPNGTKSENDSFLAEDNQQETGNAKDFCS).

The protein belongs to the class V-like SAM-binding methyltransferase superfamily. SETD3 actin-histidine methyltransferase family.

It is found in the cytoplasm. It carries out the reaction L-histidyl-[protein] + S-adenosyl-L-methionine = N(tele)-methyl-L-histidyl-[protein] + S-adenosyl-L-homocysteine + H(+). In terms of biological role, protein-histidine N-methyltransferase that specifically mediates 3-methylhistidine (tele-methylhistidine) methylation of actin at 'His-73'. Does not have protein-lysine N-methyltransferase activity and probably only catalyzes histidine methylation of actin. The chain is Actin-histidine N-methyltransferase from Xenopus tropicalis (Western clawed frog).